Consider the following 223-residue polypeptide: Ribose-5-phosphate isomerase A (223 aa).

Substrate-binding positions include 32–35 (TGST), 85–88 (DGAD), and 98–101 (KGGG). Catalysis depends on glutamate 107, which acts as the Proton acceptor. Lysine 125 contributes to the substrate binding site.

It belongs to the ribose 5-phosphate isomerase family. In terms of assembly, homodimer.

It catalyses the reaction aldehydo-D-ribose 5-phosphate = D-ribulose 5-phosphate. Its pathway is carbohydrate degradation; pentose phosphate pathway; D-ribose 5-phosphate from D-ribulose 5-phosphate (non-oxidative stage): step 1/1. In terms of biological role, catalyzes the reversible conversion of ribose-5-phosphate to ribulose 5-phosphate. The polypeptide is Ribose-5-phosphate isomerase A (Pseudomonas savastanoi pv. phaseolicola (strain 1448A / Race 6) (Pseudomonas syringae pv. phaseolicola (strain 1448A / Race 6))).